We begin with the raw amino-acid sequence, 209 residues long: Uracil phosphoribosyltransferase (209 aa).

5-phospho-alpha-D-ribose 1-diphosphate contacts are provided by residues Arg-79, Arg-104, and 131–139 (DPMLATGGS). Uracil is bound by residues Val-194 and 199–201 (GDA). A 5-phospho-alpha-D-ribose 1-diphosphate-binding site is contributed by Asp-200.

Belongs to the UPRTase family. The cofactor is Mg(2+).

The catalysed reaction is UMP + diphosphate = 5-phospho-alpha-D-ribose 1-diphosphate + uracil. It functions in the pathway pyrimidine metabolism; UMP biosynthesis via salvage pathway; UMP from uracil: step 1/1. With respect to regulation, allosterically activated by GTP. Its function is as follows. Catalyzes the conversion of uracil and 5-phospho-alpha-D-ribose 1-diphosphate (PRPP) to UMP and diphosphate. The polypeptide is Uracil phosphoribosyltransferase (Clostridium botulinum (strain ATCC 19397 / Type A)).